Reading from the N-terminus, the 425-residue chain is Phosphoribosylamine--glycine ligase (425 aa).

Residues 107 to 312 form the ATP-grasp domain; the sequence is KDLCARYNIP…LLVLLNAAVD (206 aa). 133–193 contacts ATP; the sequence is VDQTGAPIVI…EEFMTGEEAS (61 aa). Residues 214 to 233 form a disordered region; that stretch reads RVGDGDVGPNTGGMGAYSPA. 2 residues coordinate Mg(2+): glutamate 282 and asparagine 284.

It belongs to the GARS family. Mg(2+) serves as cofactor. The cofactor is Mn(2+).

The enzyme catalyses 5-phospho-beta-D-ribosylamine + glycine + ATP = N(1)-(5-phospho-beta-D-ribosyl)glycinamide + ADP + phosphate + H(+). It participates in purine metabolism; IMP biosynthesis via de novo pathway; N(1)-(5-phospho-D-ribosyl)glycinamide from 5-phospho-alpha-D-ribose 1-diphosphate: step 2/2. The polypeptide is Phosphoribosylamine--glycine ligase (Mesorhizobium japonicum (strain LMG 29417 / CECT 9101 / MAFF 303099) (Mesorhizobium loti (strain MAFF 303099))).